A 310-amino-acid polypeptide reads, in one-letter code: Cytosolic Fe-S cluster assembly factor Nubp1 homolog (310 aa).

Positions 9, 23, 26, and 32 each coordinate [4Fe-4S] cluster. 63–70 (GKGGVGKS) is an ATP binding site. Cys-240 and Cys-243 together coordinate [4Fe-4S] cluster.

The protein belongs to the Mrp/NBP35 ATP-binding proteins family. NUBP1/NBP35 subfamily. As to quaternary structure, heterotetramer of 2 Nubp1 and 2 Nubp2 chains. Requires [4Fe-4S] cluster as cofactor.

Its subcellular location is the cytoplasm. Its function is as follows. Component of the cytosolic iron-sulfur (Fe/S) protein assembly (CIA) machinery. Required for maturation of extramitochondrial Fe-S proteins. The Nubp1-Nubp2 heterotetramer forms a Fe-S scaffold complex, mediating the de novo assembly of an Fe-S cluster and its transfer to target apoproteins. This is Cytosolic Fe-S cluster assembly factor Nubp1 homolog from Drosophila virilis (Fruit fly).